Reading from the N-terminus, the 158-residue chain is Cytosine deaminase (158 aa).

The 121-residue stretch at 9 to 129 (KWDQKGMDIA…KYLQTRGHEV (121 aa)) folds into the CMP/dCMP-type deaminase domain. Asn51 contributes to the substrate binding site. Zn(2+) is bound at residue His62. Catalysis depends on Glu64, which acts as the Proton donor. 2 residues coordinate Zn(2+): Cys91 and Cys94. Asp155 serves as a coordination point for substrate.

Belongs to the cytidine and deoxycytidylate deaminase family. Homodimer. It depends on Zn(2+) as a cofactor.

Its subcellular location is the cytoplasm. It localises to the nucleus. It catalyses the reaction cytosine + H2O + H(+) = uracil + NH4(+). It participates in pyrimidine metabolism; UMP biosynthesis via salvage pathway; uracil from cytosine: step 1/1. Its function is as follows. Catalyzes the hydrolytic deamination of cytosine to uracil or 5-methylcytosine to thymine. Is involved in the pyrimidine salvage pathway, which allows the cell to utilize cytosine for pyrimidine nucleotide synthesis. This chain is Cytosine deaminase, found in Saccharomyces cerevisiae (strain ATCC 204508 / S288c) (Baker's yeast).